The primary structure comprises 395 residues: Acid ceramidase (395 aa).

Residues 1–21 (MLGRSRLTFVLLSVTVTCSVA) form the signal peptide. A disulfide bridge connects residues C31 and C340. The active-site Nucleophile is the C143. N-linked (GlcNAc...) asparagine glycans are attached at residues N173, N259, N342, and N348. C388 and C392 are joined by a disulfide.

It belongs to the acid ceramidase family. As to quaternary structure, heterodimer; disulfide-linked. The heterodimer is composed of the disulfide-linked alpha and beta chains produced by autocatalytic cleavage of the precursor. In terms of processing, N-glycosylated. Proteolytically cleaved into two chains alpha and beta that remain associated via a disulfide bond. Cleavage gives rise to a conformation change that activates the enzyme. The same catalytic Cys residue mediates the autoproteolytic cleavage and subsequent hydrolysis of lipid substrates. The beta chain may undergo an additional C-terminal processing.

Its subcellular location is the lysosome. It is found in the secreted. The catalysed reaction is an N-acylsphing-4-enine + H2O = sphing-4-enine + a fatty acid. It carries out the reaction N-dodecanoylsphing-4-enine + H2O = dodecanoate + sphing-4-enine. It catalyses the reaction N-tetradecanoylsphing-4-enine + H2O = tetradecanoate + sphing-4-enine. The enzyme catalyses N-hexadecanoylsphing-4-enine + H2O = sphing-4-enine + hexadecanoate. The catalysed reaction is N-octadecanoylsphing-4-enine + H2O = sphing-4-enine + octadecanoate. It carries out the reaction N-dodecanoyl-(4R)-hydroxysphinganine + H2O = (4R)-hydroxysphinganine + dodecanoate. It catalyses the reaction N-(dodecanoyl)-sphinganine + H2O = dodecanoate + sphinganine. The enzyme catalyses N-(acetyl)-sphing-4-enine + H2O = sphing-4-enine + acetate. The catalysed reaction is N-(hexanoyl)sphing-4-enine + H2O = hexanoate + sphing-4-enine. It carries out the reaction N-octanoylsphing-4-enine + H2O = octanoate + sphing-4-enine. It catalyses the reaction N-(9Z-octadecenoyl)-sphing-4-enine + H2O = sphing-4-enine + (9Z)-octadecenoate. The enzyme catalyses N-dodecanoylethanolamine + H2O = dodecanoate + ethanolamine. The protein operates within lipid metabolism; sphingolipid metabolism. Lysosomal ceramidase that hydrolyzes sphingolipid ceramides into sphingosine and free fatty acids at acidic pH. Ceramides, sphingosine, and its phosphorylated form sphingosine-1-phosphate are bioactive lipids that mediate cellular signaling pathways regulating several biological processes including cell proliferation, apoptosis and differentiation. Has a higher catalytic efficiency towards C12-ceramides versus other ceramides. Also catalyzes the reverse reaction allowing the synthesis of ceramides from fatty acids and sphingosine. For the reverse synthetic reaction, the natural sphingosine D-erythro isomer is more efficiently utilized as a substrate compared to D-erythro-dihydrosphingosine and D-erythro-phytosphingosine, while the fatty acids with chain lengths of 12 or 14 carbons are the most efficiently used. Also has an N-acylethanolamine hydrolase activity. By regulating the levels of ceramides, sphingosine and sphingosine-1-phosphate in the epidermis, mediates the calcium-induced differentiation of epidermal keratinocytes. Also indirectly regulates tumor necrosis factor/TNF-induced apoptosis. By regulating the intracellular balance between ceramides and sphingosine, in adrenocortical cells, probably also acts as a regulator of steroidogenesis. In Balaenoptera acutorostrata scammoni (North Pacific minke whale), this protein is Acid ceramidase.